Consider the following 709-residue polypeptide: RxLR effector protein PITG_15110 (709 aa).

The N-terminal stretch at 1–18 is a signal peptide; that stretch reads MHAYSAAVLMGLLMVAEG. Residues 51–66 carry the RxLR-dEER motif; sequence RLLREPETTEASNEDR.

The protein belongs to the RxLR effector family.

The protein localises to the secreted. The protein resides in the host cytoplasm. Its subcellular location is the host cytoskeleton. Functionally, effector that enhances P.infestans colonization of Nicotiana benthamiana leaves. The protein is RxLR effector protein PITG_15110 of Phytophthora infestans (strain T30-4) (Potato late blight agent).